Here is a 181-residue protein sequence, read N- to C-terminus: Large ribosomal subunit protein uL6 (181 aa).

It belongs to the universal ribosomal protein uL6 family. As to quaternary structure, part of the 50S ribosomal subunit.

Its function is as follows. This protein binds to the 23S rRNA, and is important in its secondary structure. It is located near the subunit interface in the base of the L7/L12 stalk, and near the tRNA binding site of the peptidyltransferase center. In Ruthia magnifica subsp. Calyptogena magnifica, this protein is Large ribosomal subunit protein uL6.